The chain runs to 448 residues: Carbon catabolite repressor protein 4 homolog 3 (448 aa).

Over residues 50–67 the composition is skewed to low complexity; the sequence is SSTSGPSDSNPESSSNRS. The segment at 50 to 92 is disordered; that stretch reads SSTSGPSDSNPESSSNRSYSRRWQNPLPRRQHPDQIPSSQIAR. Mg(2+) is bound at residue Glu-162.

This sequence belongs to the CCR4/nocturin family. In terms of assembly, component of the CCR4-NOT complex, at least composed of CRR4 and CAF1 proteins. It depends on Mg(2+) as a cofactor.

It is found in the nucleus. It localises to the cytoplasm. It catalyses the reaction Exonucleolytic cleavage of poly(A) to 5'-AMP.. Acts as a catalytic component of the CCR4-NOT core complex, which in the nucleus seems to be a general transcription factor, and in the cytoplasm the major mRNA deadenylase involved in mRNA turnover. The sequence is that of Carbon catabolite repressor protein 4 homolog 3 (CCR4-3) from Arabidopsis thaliana (Mouse-ear cress).